A 345-amino-acid chain; its full sequence is GTPase Obg (345 aa).

In terms of domain architecture, Obg spans 1–159 (MRFIDEASIT…FHLKLELKLL (159 aa)). One can recognise an OBG-type G domain in the interval 160 to 329 (ADVGIVGLPN…LIQILARQIA (170 aa)). GTP contacts are provided by residues 166-173 (GLPNAGKS), 191-195 (FTTLT), 213-216 (DIPG), 283-286 (NKID), and 310-312 (SAA). Mg(2+) contacts are provided by serine 173 and threonine 193.

The protein belongs to the TRAFAC class OBG-HflX-like GTPase superfamily. OBG GTPase family. In terms of assembly, monomer. Requires Mg(2+) as cofactor.

The protein localises to the cytoplasm. Its function is as follows. An essential GTPase which binds GTP, GDP and possibly (p)ppGpp with moderate affinity, with high nucleotide exchange rates and a fairly low GTP hydrolysis rate. Plays a role in control of the cell cycle, stress response, ribosome biogenesis and in those bacteria that undergo differentiation, in morphogenesis control. The polypeptide is GTPase Obg (Desulforapulum autotrophicum (strain ATCC 43914 / DSM 3382 / VKM B-1955 / HRM2) (Desulfobacterium autotrophicum)).